A 439-amino-acid polypeptide reads, in one-letter code: SET domain-containing protein 4 (439 aa).

Over residues 1–19 (MQRRRGRTERARKRRRRSS) the composition is skewed to basic residues. Residues 1–25 (MQRRRGRTERARKRRRRSSGSRAVN) form a disordered region. Residues 47 to 272 (TDLVPASFPG…KHQEVFICYG (226 aa)) form the SET domain. Tyr271 lines the S-adenosyl-L-methionine pocket.

The protein belongs to the class V-like SAM-binding methyltransferase superfamily. SETD4 family. Forms a ternary complex with TBK1 and ZNF268; the interaction with TBK1 is ZNF268-dependent and leads to TBK1 monomethylation. In terms of tissue distribution, expressed in the forebrain subventricular zone, in quiescent neural stem cells.

The protein localises to the cytoplasm. It localises to the cytosol. It is found in the nucleus. It catalyses the reaction L-lysyl(4)-[histone H3] + S-adenosyl-L-methionine = N(6)-methyl-L-lysyl(4)-[histone H3] + S-adenosyl-L-homocysteine + H(+). It carries out the reaction N(6)-methyl-L-lysyl(4)-[histone H3] + S-adenosyl-L-methionine = N(6),N(6)-dimethyl-L-lysyl(4)-[histone H3] + S-adenosyl-L-homocysteine + H(+). The catalysed reaction is L-lysyl(20)-[histone H4] + S-adenosyl-L-methionine = N(6)-methyl-L-lysyl(20)-[histone H4] + S-adenosyl-L-homocysteine + H(+). The enzyme catalyses N(6)-methyl-L-lysyl(20)-[histone H4] + S-adenosyl-L-methionine = N(6),N(6)-dimethyl-L-lysyl(20)-[histone H4] + S-adenosyl-L-homocysteine + H(+). It catalyses the reaction N(6),N(6)-dimethyl-L-lysyl(20)-[histone H4] + S-adenosyl-L-methionine = N(6),N(6),N(6)-trimethyl-L-lysyl(20)-[histone H4] + S-adenosyl-L-homocysteine + H(+). It carries out the reaction L-lysyl-[protein] + S-adenosyl-L-methionine = N(6)-methyl-L-lysyl-[protein] + S-adenosyl-L-homocysteine + H(+). In terms of biological role, protein-lysine N-methyltransferase that methylates both histones and non-histone proteins. Via its catalytic activity, regulates many processes, including cell proliferation, cell differentiation, inflammatory response and apoptosis. Regulates the inflammatory response by mediating mono- and dimethylation of 'Lys-4' of histone H3 (H3K4me1 and H3K4me2, respectively), leading to activate the transcription of pro-inflammatory cytokines IL6 and TNF-alpha. Also involved in the regulation of stem cell quiescence by catalyzing the trimethylation of 'Lys-20' of histone H4 (H4K20me3), thereby promoting heterochromatin formation. In the brain, epigenetically controls quiescence of neural stem cells for sustaining a protected neural stem cell population and maintaining a stem cell reservoir for neurogenesis. Involved in proliferation, migration, paracrine and myogenic differentiation of bone marrow mesenchymal stem cells (BMSCs). Through the catalysis of XRCC5/Ku70 trimethylation, regulates BAX-mediated apoptosis. SETD4-catalyzed XRCC5 methylation results in XRCC5 translocation to the cytoplasm, where it interacts with BAX, sequestering it from the mitochondria, hence preventing BAX-mediated apoptosis. In Mus musculus (Mouse), this protein is SET domain-containing protein 4.